Reading from the N-terminus, the 632-residue chain is MSHIMNLLVISFVLAGSSWSLLGYQDDFSSKRSGALASNPTYNLPQDKGYGRDMYQPYYICEPDNDGSALTLPSWHYSCKESCMGNHLKRVVNITGARWNYVGISIPVFKIVTNEVCYTSHENVWGYCSQYQISRPVATQKSDVSCITSSMWDNDKSPIGSLYNIVNSNEAECDYFSDITDCNRDYQIFKREGKLIKRSDDSPLELSIVTDGIRTDPASEYLSLDDVSWFWKLPNNDMSPPCGWEKTQKLSCSYTDTTDVIKCNSIGYTYNIQGISKKSTCAGNIYDTDGPFPFFYDAEEALMSTDDACGKAKQGKPDADIAFIEGVNRAFEDLELTYCSATCDLFARQGTPNEDHVLDTPIGTWRYVMRDNLDPALVPCLPTSNWTISDPTTICHGKDHILVVDTATGHSGSWDTKKDYIITGEVCNTNNDEMGDDYDGMRDKILRGETIEIKFWTGDIIRMAPPYDNPEWIKGSVLFRQNPGWFSSVELNKDMIHTRDNITDLLTVMVQNATAEVMYKRLDPKTMKHILFAEIVDGVGNVSGKISGFLTGLFGGFTKAVIIVASLAICYIVLSVLWKVRLVASIFNSAKKKRVRISDILDEEPHRIQQSRPTLSRKKKTRESIQMLLNDI.

A signal peptide spans methionine 1–serine 17. N-linked (GlcNAc...) asparagine; by host glycans are attached at residues asparagine 93, asparagine 385, asparagine 501, asparagine 512, and asparagine 541. Residues alanine 560–tryptophan 578 form a helical membrane-spanning segment.

It belongs to the nucleorhabdovirus glycoprotein family.

Its subcellular location is the virion membrane. This protein forms spikes on the surface of the virion. It is responsible both for the binding of the virus to susceptible host cells and for inducing the uptake of the virus by the cell. The interaction between the internal components of the virion and the portion of the glycoprotein exposed on the cytoplasmic face of the plasma membrane probably directs envelopment and virus budding. The protein is Spike glycoprotein (G) of Aphis (Hairy beggarticks).